A 503-amino-acid polypeptide reads, in one-letter code: Glycoprotein 3-alpha-L-fucosyltransferase A (503 aa).

The Cytoplasmic portion of the chain corresponds to 1–10 (MRRPKISLKK). Residues 11–28 (YFYLTLICALLLIFGFSL) form a helical; Signal-anchor for type II membrane protein membrane-spanning segment. Over 29-503 (KEREIWKTLS…KDVISDSSDD (475 aa)) the chain is Lumenal. The interval 44 to 71 (ITTQQQQHQHLHQLQSMDEEHPMATSST) is disordered. Residues 47–58 (QQQQHQHLHQLQ) are compositionally biased toward low complexity. N-linked (GlcNAc...) asparagine glycosylation is found at Asn-262, Asn-295, and Asn-299.

Belongs to the glycosyltransferase 10 family. Mn(2+) serves as cofactor.

It localises to the golgi apparatus. The protein localises to the golgi stack membrane. It carries out the reaction N(4)-{beta-D-GlcNAc-(1-&gt;2)-alpha-D-Man-(1-&gt;3)-[beta-D-GlcNAc-(1-&gt;2)-alpha-D-Man-(1-&gt;6)]-beta-D-Man-(1-&gt;4)-beta-D-GlcNAc-(1-&gt;4)-beta-D-GlcNAc}-L-asparaginyl-[protein] + GDP-beta-L-fucose = N(4)-{beta-D-GlcNAc-(1-&gt;2)-alpha-D-Man-(1-&gt;3)-[beta-D-GlcNAc-(1-&gt;2)-alpha-D-Man-(1-&gt;6)]-beta-D-Man-(1-&gt;4)-beta-D-GlcNAc-(1-&gt;4)-[alpha-L-Fuc(1-&gt;3)]-beta-D-GlcNAc}-L-asparaginyl-[protein] + GDP + H(+). It functions in the pathway protein modification; protein glycosylation. Functionally, catalyzes alpha-1,3 glycosidic linkages of N-glycans. Plays a role in neuronal development by promoting ventral nerve cord formation, possibly by promoting interactions between migrating cells and the extracellular matrix or by promoting neural activity. This chain is Glycoprotein 3-alpha-L-fucosyltransferase A (FucTA), found in Drosophila melanogaster (Fruit fly).